We begin with the raw amino-acid sequence, 332 residues long: Packaging enzyme P4 (332 aa).

An involved in the regulation and mechanisms of transcription, replication and genome packaging region spans residues 111–138 (RWPSEGIYSGVTALMGATGSGKSITLNE). 126–133 (GATGSGKS) provides a ligand contact to ATP. The disordered stretch occupies residues 310 to 332 (LERGSVDTDDRNSAPRRGANFSL). Residues 313–322 (GSVDTDDRNS) show a composition bias toward basic and acidic residues.

Homohexamer. Part of the packaging complex composed of RDRP, P4 and P7.

The protein localises to the virion. The enzyme catalyses a ribonucleoside 5'-triphosphate + H2O = a ribonucleoside 5'-diphosphate + phosphate + H(+). Functionally, packaging motor with helicase and translocase activities. Part of the packaging complex that packages the viral RNA segments, replicate them into a double-stranded form and transcribe them. is one of the structural proteins of the polyhedral procapsid, which is responsible for genomic replication and transcription. Displays single-stranded RNA-stimulated NTPase activity. This Pseudomonas savastanoi pv. phaseolicola (Pseudomonas syringae pv. phaseolicola) protein is Packaging enzyme P4 (P4).